Here is a 493-residue protein sequence, read N- to C-terminus: Galactose-1-phosphate uridylyltransferase (493 aa).

This sequence belongs to the galactose-1-phosphate uridylyltransferase type 2 family.

The protein localises to the cytoplasm. It carries out the reaction alpha-D-galactose 1-phosphate + UDP-alpha-D-glucose = alpha-D-glucose 1-phosphate + UDP-alpha-D-galactose. The protein operates within carbohydrate metabolism; galactose metabolism. This chain is Galactose-1-phosphate uridylyltransferase, found in Lactococcus lactis subsp. cremoris (strain MG1363).